We begin with the raw amino-acid sequence, 72 residues long: Translation initiation factor IF-1 (72 aa).

Residues 1-72 enclose the S1-like domain; it reads MAKEEMLEFP…TKGRINYRFK (72 aa).

This sequence belongs to the IF-1 family. In terms of assembly, component of the 30S ribosomal translation pre-initiation complex which assembles on the 30S ribosome in the order IF-2 and IF-3, IF-1 and N-formylmethionyl-tRNA(fMet); mRNA recruitment can occur at any time during PIC assembly.

The protein resides in the cytoplasm. In terms of biological role, one of the essential components for the initiation of protein synthesis. Stabilizes the binding of IF-2 and IF-3 on the 30S subunit to which N-formylmethionyl-tRNA(fMet) subsequently binds. Helps modulate mRNA selection, yielding the 30S pre-initiation complex (PIC). Upon addition of the 50S ribosomal subunit IF-1, IF-2 and IF-3 are released leaving the mature 70S translation initiation complex. The sequence is that of Translation initiation factor IF-1 from Paracoccus denitrificans (strain Pd 1222).